The primary structure comprises 134 residues: MFRTAALTAARVARPAVASAVRAGVARPAFVQAVPKVAAFQAVRFYSAGGHLKKDEVFSRIAQVLSGFDKVNDPKNITETAHFANDLGLDSLDTVEVVMAIEEEFSIEIPDKDADQIHSVDKAVEYILSQPDAN.

The N-terminal 46 residues, 1–46, are a transit peptide targeting the mitochondrion; that stretch reads MFRTAALTAARVARPAVASAVRAGVARPAFVQAVPKVAAFQAVRFY. In terms of domain architecture, Carrier spans 55–131; it reads DEVFSRIAQV…KAVEYILSQP (77 aa). Ser-91 is subject to O-(pantetheine 4'-phosphoryl)serine.

This sequence belongs to the acyl carrier protein (ACP) family. Complex I is composed of about 30 different subunits. 4'-phosphopantetheine is transferred from CoA to a specific serine of apo-ACP by acpS. This modification is essential for activity because fatty acids are bound in thioester linkage to the sulfhydryl of the prosthetic group.

The protein localises to the mitochondrion. It participates in lipid metabolism; fatty acid biosynthesis. Its function is as follows. Carrier of the growing fatty acid chain in fatty acid biosynthesis. May be involved in the synthesis of very-long-chain fatty acids. Accessory and non-catalytic subunit of the mitochondrial membrane respiratory chain NADH dehydrogenase (Complex I), which functions in the transfer of electrons from NADH to the respiratory chain. The polypeptide is Acyl carrier protein, mitochondrial (nuo-12) (Neurospora crassa (strain ATCC 24698 / 74-OR23-1A / CBS 708.71 / DSM 1257 / FGSC 987)).